The following is a 498-amino-acid chain: Transcription factor kayak (498 aa).

Residues 108–127 (ASLGQGSESEDSNASYNDTQ) show a composition bias toward polar residues. Disordered regions lie at residues 108–144 (ASLGQGSESEDSNASYNDTQMNEEQDTTDTSSAHTDS) and 177–234 (GSAS…KRRV). Composition is skewed to low complexity over residues 135-144 (TDTSSAHTDS) and 177-191 (GSASVGSSNANTSNT). One can recognise a bZIP domain in the interval 212 to 275 (EQKRAVRRER…KQLEYLLATH (64 aa)). A basic motif region spans residues 214-233 (KRAVRRERNKQAAARCRKRR). The leucine-zipper stretch occupies residues 240-247 (LTEEVEQL). Over residues 304 to 325 (AGSSGSGASSHHNHNSNDSSNG) the composition is skewed to low complexity. Disordered stretches follow at residues 304–345 (AGSS…SPLD) and 465–498 (TPVSGPLVPNSSSTNKHPLELPTPTAEPSKLVSL). Residues 333–343 (TLNSTGRSNSP) show a composition bias toward polar residues. At Ser342 the chain carries Phosphoserine.

The protein belongs to the bZIP family. Fos subfamily. As to quaternary structure, homodimer. Heterodimer with Jra. The kay-Jra heterodimer binds more stably to the AP-1 site than either of the two proteins alone.

Its subcellular location is the nucleus. Functionally, developmentally regulated transcription factor AP-1 binds and recognizes the enhancer DNA sequence: 5'-TGA[CG]TCA-3'. May play a role in the function or determination of a particular subset of cells in the developing embryo. It is able to carry out its function either independently of or in conjunction with Jra. This chain is Transcription factor kayak, found in Drosophila simulans (Fruit fly).